The chain runs to 64 residues: DNA gyrase inhibitor YacG (64 aa).

The Zn(2+) site is built by cysteine 7, cysteine 10, cysteine 26, and cysteine 30. The disordered stretch occupies residues 44–64; it reads RIPGEIDPELLPYPEEGEQWQ.

This sequence belongs to the DNA gyrase inhibitor YacG family. In terms of assembly, interacts with GyrB. Zn(2+) serves as cofactor.

Its function is as follows. Inhibits all the catalytic activities of DNA gyrase by preventing its interaction with DNA. Acts by binding directly to the C-terminal domain of GyrB, which probably disrupts DNA binding by the gyrase. The protein is DNA gyrase inhibitor YacG of Aeromonas hydrophila subsp. hydrophila (strain ATCC 7966 / DSM 30187 / BCRC 13018 / CCUG 14551 / JCM 1027 / KCTC 2358 / NCIMB 9240 / NCTC 8049).